A 345-amino-acid chain; its full sequence is Phosphate acyltransferase (345 aa).

This sequence belongs to the PlsX family. In terms of assembly, homodimer. Probably interacts with PlsY.

The protein localises to the cytoplasm. It carries out the reaction a fatty acyl-[ACP] + phosphate = an acyl phosphate + holo-[ACP]. Its pathway is lipid metabolism; phospholipid metabolism. In terms of biological role, catalyzes the reversible formation of acyl-phosphate (acyl-PO(4)) from acyl-[acyl-carrier-protein] (acyl-ACP). This enzyme utilizes acyl-ACP as fatty acyl donor, but not acyl-CoA. This Chromobacterium violaceum (strain ATCC 12472 / DSM 30191 / JCM 1249 / CCUG 213 / NBRC 12614 / NCIMB 9131 / NCTC 9757 / MK) protein is Phosphate acyltransferase.